The primary structure comprises 761 residues: Phosphoribosylformylglycinamidine synthase subunit PurL (761 aa).

His58 is an active-site residue. Positions 61 and 105 each coordinate ATP. Residue Glu107 participates in Mg(2+) binding. Residues 108–111 (SHNH) and Arg130 each bind substrate. His109 functions as the Proton acceptor in the catalytic mechanism. Asp131 provides a ligand contact to Mg(2+). Residue Gln259 coordinates substrate. Residue Asp287 coordinates Mg(2+). 331–333 (ESQ) serves as a coordination point for substrate. The ATP site is built by Asn519 and Gly556. Asn557 lines the Mg(2+) pocket. Ser559 provides a ligand contact to substrate.

The protein belongs to the FGAMS family. As to quaternary structure, monomer. Part of the FGAM synthase complex composed of 1 PurL, 1 PurQ and 2 PurS subunits.

The protein localises to the cytoplasm. The enzyme catalyses N(2)-formyl-N(1)-(5-phospho-beta-D-ribosyl)glycinamide + L-glutamine + ATP + H2O = 2-formamido-N(1)-(5-O-phospho-beta-D-ribosyl)acetamidine + L-glutamate + ADP + phosphate + H(+). It participates in purine metabolism; IMP biosynthesis via de novo pathway; 5-amino-1-(5-phospho-D-ribosyl)imidazole from N(2)-formyl-N(1)-(5-phospho-D-ribosyl)glycinamide: step 1/2. Its function is as follows. Part of the phosphoribosylformylglycinamidine synthase complex involved in the purines biosynthetic pathway. Catalyzes the ATP-dependent conversion of formylglycinamide ribonucleotide (FGAR) and glutamine to yield formylglycinamidine ribonucleotide (FGAM) and glutamate. The FGAM synthase complex is composed of three subunits. PurQ produces an ammonia molecule by converting glutamine to glutamate. PurL transfers the ammonia molecule to FGAR to form FGAM in an ATP-dependent manner. PurS interacts with PurQ and PurL and is thought to assist in the transfer of the ammonia molecule from PurQ to PurL. This is Phosphoribosylformylglycinamidine synthase subunit PurL from Rhodococcus opacus (strain B4).